We begin with the raw amino-acid sequence, 324 residues long: tRNA U34 carboxymethyltransferase (324 aa).

Carboxy-S-adenosyl-L-methionine is bound by residues Lys92, Trp106, Lys111, Gly131, 153-155 (DPT), 182-183 (IE), Met197, Tyr201, and Arg316.

Belongs to the class I-like SAM-binding methyltransferase superfamily. CmoB family. In terms of assembly, homotetramer.

The catalysed reaction is carboxy-S-adenosyl-L-methionine + 5-hydroxyuridine(34) in tRNA = 5-carboxymethoxyuridine(34) in tRNA + S-adenosyl-L-homocysteine + H(+). In terms of biological role, catalyzes carboxymethyl transfer from carboxy-S-adenosyl-L-methionine (Cx-SAM) to 5-hydroxyuridine (ho5U) to form 5-carboxymethoxyuridine (cmo5U) at position 34 in tRNAs. This is tRNA U34 carboxymethyltransferase from Proteus mirabilis (strain HI4320).